Reading from the N-terminus, the 87-residue chain is uncharacterized protein (87 aa).

The chain crosses the membrane as a helical span at residues 29–49 (ILWMIIFVVIIAVIIYILISP).

Its subcellular location is the membrane. This is an uncharacterized protein from Methanocaldococcus jannaschii (strain ATCC 43067 / DSM 2661 / JAL-1 / JCM 10045 / NBRC 100440) (Methanococcus jannaschii).